The primary structure comprises 1024 residues: Non-canonical nonribosomal peptide synthetase FrzA (1024 aa).

An adenylation (A) domain region spans residues 29–425 (RAQKSHQAIA…GRRDHQVKVR (397 aa)). The Carrier domain maps to 534-611 (NASQDVRSAL…ALTSIIKQRL (78 aa)). An O-(pantetheine 4'-phosphoryl)serine modification is found at serine 571. The 244-residue stretch at 655–898 (LTGGTGFVGA…VPVDYVNAAI (244 aa)) folds into the Thioester reductase (TE) domain.

The protein belongs to the NRP synthetase family. Pantetheine 4'-phosphate is required as a cofactor.

It carries out the reaction L-tyrosinal + AMP + diphosphate + NADP(+) = L-tyrosine + ATP + NADPH + H(+). Its pathway is secondary metabolite biosynthesis. In terms of biological role, non-canonical nonribosomal peptide synthetase; part of the gene cluster that mediates the biosynthesis of the alkaloid (-)-FR901483, a potent immunosuppressant that shows efficacy in animal models and a probable inhibitor of purine nucleotide biosynthesis by targeting phosphoribosylpyrophosphate amidotransferase (PPAT). Within the pathway, FrzA catalyzes the reduction of L-tyrosine via its C-terminal reductase domain to produce L-tyrosinal. The biosynthesis of (-)-FR901483 starts with the condensation of two L-tyrosines to yield (S,S)-dityrosyl-piperazine. This process occurs in 3 steps with the non-canonical nonribosomal peptide synthetase FrzA catalyzing the reduction of L-tyrosine into L-tyrosinal, the spontaneous condensation of 2 L-tyrosinal units, and the subsequent reduction by the NmrA-like family domain-containing oxidoreductase FrzB. The cytochrome P450 monooxygenase FrzC then performs coupling between N10 and C1' to morph the piperazine into a 1,4-diazabicyclo[3.2.1]octane spiro-fused to a 2,5-cyclohexadienone. The dienone portion is further reduced to cyclohexanone by the flavin-dependent reductase FrzD. The methyltranserases (MTs) FrzE and FrzF are then involved in the methylation at the C10' amine and the C4 phenolic oxygen, respectively. The order of the two MTs appear to be interchangeable. Cleavage of the C9-N10' bond by the dioxygenase FrzG then leads to formation of a conjugated iminium. In addition to the oxidation of C9, an additional dehydrogenation between C7 and C8 can occur to give a likely shunt product. The next biosynthetic step is the intramolecular aldol condensation catalyzed by the newly identified aldolase FrzH to yield an aza-tricyclic product with the formation of a C9-C3' bond. The short-chain dehydrogenase/reductase FrzI then produces dephospho-(-)-FR901483 that is phosphorylated at C4'-OH into (-)-FR901483 by the phosphotransferase FrzJ. In Cladobotryum sp, this protein is Non-canonical nonribosomal peptide synthetase FrzA.